The chain runs to 79 residues: uncharacterized protein (79 aa).

This is an uncharacterized protein from Listeria innocua serovar 6a (strain ATCC BAA-680 / CLIP 11262).